Reading from the N-terminus, the 256-residue chain is Small ribosomal subunit protein uS2 (256 aa).

Belongs to the universal ribosomal protein uS2 family.

This is Small ribosomal subunit protein uS2 from Brucella abortus (strain S19).